The sequence spans 152 residues: Transcriptional regulator MraZ (152 aa).

2 consecutive SpoVT-AbrB domains span residues 5–52 (ATLV…PLPE) and 81–124 (ASEC…DETT).

Belongs to the MraZ family. In terms of assembly, forms oligomers.

It is found in the cytoplasm. It localises to the nucleoid. In terms of biological role, negatively regulates its own expression and that of the subsequent genes in the proximal part of the division and cell wall (dcw) gene cluster. Acts by binding directly to DNA. May also regulate the expression of genes outside the dcw cluster. This Salmonella paratyphi A (strain ATCC 9150 / SARB42) protein is Transcriptional regulator MraZ.